The sequence spans 580 residues: Membrane protein insertase YidC (580 aa).

The next 6 helical transmembrane spans lie at 5 to 25, 259 to 279, 362 to 382, 427 to 447, 477 to 497, and 513 to 533; these read SVTG…FMSP, KYFV…LDGS, GLII…LSLA, LGGC…FYVF, IPMY…TVFV, and IMLY…PSGL.

The protein belongs to the OXA1/ALB3/YidC family. Type 1 subfamily. In terms of assembly, interacts with the Sec translocase complex via SecD. Specifically interacts with transmembrane segments of nascent integral membrane proteins during membrane integration.

It is found in the cell inner membrane. Required for the insertion and/or proper folding and/or complex formation of integral membrane proteins into the membrane. Involved in integration of membrane proteins that insert both dependently and independently of the Sec translocase complex, as well as at least some lipoproteins. Aids folding of multispanning membrane proteins. The polypeptide is Membrane protein insertase YidC (Chlorobium phaeovibrioides (strain DSM 265 / 1930) (Prosthecochloris vibrioformis (strain DSM 265))).